Consider the following 402-residue polypeptide: BTB and MATH domain-containing protein 40 (402 aa).

The tract at residues 1–25 (MSDRHLYGSDHSYLSSKPSCSSCRR) is disordered. Positions 15 to 25 (SSKPSCSSCRR) are enriched in low complexity. Residues 43–177 (VLTQRWTVCN…DKSLVISCHI (135 aa)) enclose the MATH domain. One can recognise a BTB domain in the interval 222–295 (TDMTIVAGPL…IYAGVIKSDI (74 aa)).

In terms of assembly, interacts with cul-3.

It functions in the pathway protein modification; protein ubiquitination. Functionally, probable substrate-specific adapter of an E3 ubiquitin-protein ligase complex which mediates the ubiquitination and subsequent proteasomal degradation of target proteins. In Caenorhabditis elegans, this protein is BTB and MATH domain-containing protein 40 (bath-40).